The chain runs to 663 residues: Bifunctional polymyxin resistance protein ArnA (663 aa).

Residues 1-304 form a formyltransferase ArnAFT region; it reads MKAVVFAYHD…ELGLVAGMRL (304 aa). H104 acts as the Proton donor; for formyltransferase activity in catalysis. Residues R114 and 136-140 contribute to the (6R)-10-formyltetrahydrofolate site; that span reads TMRPD. The interval 316 to 663 is dehydrogenase ArnADH; the sequence is RLTRVLILGV…GAVSTGVEHD (348 aa). NAD(+) contacts are provided by residues D349 and 370–371; that span reads DI. UDP-alpha-D-glucuronate is bound by residues A395, Y400, and 434–435; that span reads TS. E436 acts as the Proton acceptor; for decarboxylase activity in catalysis. UDP-alpha-D-glucuronate is bound by residues R462, N494, 528–537, and Y615; that span reads QLVDGGAQKR. R621 acts as the Proton donor; for decarboxylase activity in catalysis.

The protein in the N-terminal section; belongs to the Fmt family. UDP-L-Ara4N formyltransferase subfamily. It in the C-terminal section; belongs to the NAD(P)-dependent epimerase/dehydratase family. UDP-glucuronic acid decarboxylase subfamily. Homohexamer, formed by a dimer of trimers.

The catalysed reaction is UDP-alpha-D-glucuronate + NAD(+) = UDP-beta-L-threo-pentopyranos-4-ulose + CO2 + NADH. It carries out the reaction UDP-4-amino-4-deoxy-beta-L-arabinose + (6R)-10-formyltetrahydrofolate = UDP-4-deoxy-4-formamido-beta-L-arabinose + (6S)-5,6,7,8-tetrahydrofolate + H(+). The protein operates within nucleotide-sugar biosynthesis; UDP-4-deoxy-4-formamido-beta-L-arabinose biosynthesis; UDP-4-deoxy-4-formamido-beta-L-arabinose from UDP-alpha-D-glucuronate: step 1/3. It functions in the pathway nucleotide-sugar biosynthesis; UDP-4-deoxy-4-formamido-beta-L-arabinose biosynthesis; UDP-4-deoxy-4-formamido-beta-L-arabinose from UDP-alpha-D-glucuronate: step 3/3. It participates in bacterial outer membrane biogenesis; lipopolysaccharide biosynthesis. Functionally, bifunctional enzyme that catalyzes the oxidative decarboxylation of UDP-glucuronic acid (UDP-GlcUA) to UDP-4-keto-arabinose (UDP-Ara4O) and the addition of a formyl group to UDP-4-amino-4-deoxy-L-arabinose (UDP-L-Ara4N) to form UDP-L-4-formamido-arabinose (UDP-L-Ara4FN). The modified arabinose is attached to lipid A and is required for resistance to polymyxin and cationic antimicrobial peptides. The sequence is that of Bifunctional polymyxin resistance protein ArnA from Aeromonas salmonicida (strain A449).